We begin with the raw amino-acid sequence, 326 residues long: DNA-directed RNA polymerase subunit alpha (326 aa).

The segment at 1 to 231 (MQTALLKPKI…DQLSVFAALE (231 aa)) is alpha N-terminal domain (alpha-NTD). Residues 247 to 326 (IDPILLRPVD…ENWPPAGLEK (80 aa)) form an alpha C-terminal domain (alpha-CTD) region.

The protein belongs to the RNA polymerase alpha chain family. Homodimer. The RNAP catalytic core consists of 2 alpha, 1 beta, 1 beta' and 1 omega subunit. When a sigma factor is associated with the core the holoenzyme is formed, which can initiate transcription.

It catalyses the reaction RNA(n) + a ribonucleoside 5'-triphosphate = RNA(n+1) + diphosphate. In terms of biological role, DNA-dependent RNA polymerase catalyzes the transcription of DNA into RNA using the four ribonucleoside triphosphates as substrates. This is DNA-directed RNA polymerase subunit alpha from Cupriavidus necator (strain ATCC 17699 / DSM 428 / KCTC 22496 / NCIMB 10442 / H16 / Stanier 337) (Ralstonia eutropha).